Consider the following 346-residue polypeptide: Dihydroorotase (346 aa).

Zn(2+)-binding residues include His17 and His19. Residues 19 to 21 and Asn45 contribute to the substrate site; that span reads HLR. Residues Lys103, His140, and His178 each coordinate Zn(2+). Lys103 carries the N6-carboxylysine modification. His140 is a substrate binding site. Leu223 contributes to the substrate binding site. Asp251 is a binding site for Zn(2+). Asp251 is an active-site residue. Substrate-binding residues include His255 and Ala267.

The protein belongs to the metallo-dependent hydrolases superfamily. DHOase family. Class II DHOase subfamily. Homodimer. Zn(2+) serves as cofactor.

It carries out the reaction (S)-dihydroorotate + H2O = N-carbamoyl-L-aspartate + H(+). The protein operates within pyrimidine metabolism; UMP biosynthesis via de novo pathway; (S)-dihydroorotate from bicarbonate: step 3/3. Catalyzes the reversible cyclization of carbamoyl aspartate to dihydroorotate. The protein is Dihydroorotase of Synechococcus sp. (strain RCC307).